The chain runs to 260 residues: Malonyl-[acyl-carrier protein] O-methyltransferase (260 aa).

It belongs to the methyltransferase superfamily.

The enzyme catalyses malonyl-[ACP] + S-adenosyl-L-methionine = malonyl-[ACP] methyl ester + S-adenosyl-L-homocysteine. It functions in the pathway cofactor biosynthesis; biotin biosynthesis. In terms of biological role, converts the free carboxyl group of a malonyl-thioester to its methyl ester by transfer of a methyl group from S-adenosyl-L-methionine (SAM). It allows to synthesize pimeloyl-ACP via the fatty acid synthetic pathway. In Herminiimonas arsenicoxydans, this protein is Malonyl-[acyl-carrier protein] O-methyltransferase.